The following is a 467-amino-acid chain: MAESNTDSKSSNQMWGGRFASGPDAIMEEINASIGFDKKLFAQDIRGSIAHATMLAHQGIISAEDKDKIVHGLNTILSEIESGNFEFSRRLEDIHMNIEARLATLIGPAAGRLHTARSRNDQVALDFRLWVKEELEKTEKMLTGLIAAFLDRAEEHAESVMPGFTHLQTAQPVTFGHHCMAYVEMFGRDRSRVRHAIEHLDESPIGAAALAGTGYPIDRHMTAKALGFREPTRNSIDTVSDRDFAIEFLAIAAITGMHLSRLAEEIVIWSTPQFGFVRLSDAFSTGSSIMPQKKNPDAAELVRAKTGRINGSLIALLTIMKGLPLAYSKDMQEDKEQVFDAAESLELAIAAMTGMVRDMTVNTARMKAAAGSGFSTATDLADWLVREAGLPFRDAHHVTGRAVALAESKGCDLAELPLADLQAIHPDITDKVYDVLTVEASVASRKSFGGTAPSEVRKQIAFWRARN.

This sequence belongs to the lyase 1 family. Argininosuccinate lyase subfamily.

The protein localises to the cytoplasm. The enzyme catalyses 2-(N(omega)-L-arginino)succinate = fumarate + L-arginine. It participates in amino-acid biosynthesis; L-arginine biosynthesis; L-arginine from L-ornithine and carbamoyl phosphate: step 3/3. The polypeptide is Argininosuccinate lyase (Rhizobium etli (strain CIAT 652)).